The sequence spans 194 residues: UPF0215 protein DR_A0167 (194 aa).

The protein belongs to the UPF0215 family.

The chain is UPF0215 protein DR_A0167 from Deinococcus radiodurans (strain ATCC 13939 / DSM 20539 / JCM 16871 / CCUG 27074 / LMG 4051 / NBRC 15346 / NCIMB 9279 / VKM B-1422 / R1).